Here is a 127-residue protein sequence, read N- to C-terminus: MRLCICFVLLAVIVCASADNPFTRGGRFVLDAAGGAWDMLRAYRDMREANHIGADKYFHARGNYDAARRGPGGAWAARVISDARENWQGGVSGRGAEDTRADQEANAWGRNGGDPNRYRPPGLPSKY.

Positions M1–A18 are cleaved as a signal peptide. The interval Q88–Y127 is disordered.

The protein belongs to the SAA family. This protein is the precursor of amyloid protein A, which is formed by the removal of approximately 3 residues from the C-terminal end. In terms of tissue distribution, expressed by the liver; secreted in plasma. Also present in the liver and lung irrespective of induction.

It is found in the secreted. Its function is as follows. Major acute phase reactant. Apolipoprotein of the HDL complex. The polypeptide is Serum amyloid A protein (Anas platyrhynchos (Mallard)).